We begin with the raw amino-acid sequence, 613 residues long: Myosin light chain kinase 2, skeletal/cardiac muscle (613 aa).

Residues 1 to 20 are compositionally biased toward polar residues; it reads MTTENGAVELGSQSLSTEQT. Residues 1–168 form a disordered region; the sequence is MTTENGAVEL…RGSPAFLHSP (168 aa). Basic and acidic residues predominate over residues 32 to 55; it reads SEKEPSAPATEKDLSPPNAKKDPG. Residues 56-66 show a composition bias toward pro residues; it reads APDPKNNPDPP. The span at 67-83 shows a compositional bias: basic and acidic residues; it reads SLKKDPAKAPGPEKKGD. Over residues 95-105 the composition is skewed to gly residues; sequence SGEGDGGGGPA. A compositionally biased stretch (low complexity) spans 106–122; that stretch reads EGSEGPPAALPLPTATA. Basic and acidic residues predominate over residues 145 to 158; it reads KAGKKAAECREAGR. 3 positions are modified to phosphoserine: serine 161, serine 167, and serine 169. The disordered stretch occupies residues 219 to 240; the sequence is EKKKEEAEKASGQAGQAKVQGD. A Protein kinase domain is found at 302–557; it reads MNSKEALGGG…AEQCLAHPWL (256 aa). ATP-binding positions include 308-316 and lysine 331; that span reads LGGGKFGAV. Catalysis depends on aspartate 423, which acts as the Proton acceptor. Threonine 462 is subject to Phosphothreonine. Positions 591-603 are calmodulin-binding; the sequence is IAVSAANRFKKIS.

This sequence belongs to the protein kinase superfamily. CAMK Ser/Thr protein kinase family. In terms of assembly, may interact with centrin.

It localises to the cytoplasm. It catalyses the reaction L-seryl-[myosin light chain] + ATP = O-phospho-L-seryl-[myosin light chain] + ADP + H(+). The enzyme catalyses L-threonyl-[myosin light chain] + ATP = O-phospho-L-threonyl-[myosin light chain] + ADP + H(+). Implicated in the level of global muscle contraction and cardiac function. Phosphorylates a specific serine in the N-terminus of a myosin light chain. This is Myosin light chain kinase 2, skeletal/cardiac muscle (Mylk2) from Mus musculus (Mouse).